Here is an 89-residue protein sequence, read N- to C-terminus: Small ribosomal subunit protein uS15 (89 aa).

Belongs to the universal ribosomal protein uS15 family. As to quaternary structure, part of the 30S ribosomal subunit. Forms a bridge to the 50S subunit in the 70S ribosome, contacting the 23S rRNA.

One of the primary rRNA binding proteins, it binds directly to 16S rRNA where it helps nucleate assembly of the platform of the 30S subunit by binding and bridging several RNA helices of the 16S rRNA. Its function is as follows. Forms an intersubunit bridge (bridge B4) with the 23S rRNA of the 50S subunit in the ribosome. This chain is Small ribosomal subunit protein uS15, found in Paenarthrobacter aurescens (strain TC1).